The following is a 187-amino-acid chain: MATGKEILNDAKQKMAKSGYALQRTLADIRAGQANASLLNSVKVEYYGAPTPLNQVASITIPEARQLLITPYDESVLEEIEKAIYASNLGLTPQNDGSSIRLIIPQLTEDRRKELVKDVKAELEKAKVAVRNVRREAMDDLKKGNKNGDFNDDEFHDLEKKVQNETDAGIKNLEDIANAKEKELMEG.

The disordered stretch occupies residues 141-169 (LKKGNKNGDFNDDEFHDLEKKVQNETDAG).

This sequence belongs to the RRF family.

The protein localises to the cytoplasm. Responsible for the release of ribosomes from messenger RNA at the termination of protein biosynthesis. May increase the efficiency of translation by recycling ribosomes from one round of translation to another. The protein is Ribosome-recycling factor of Limosilactobacillus reuteri (strain DSM 20016) (Lactobacillus reuteri).